A 293-amino-acid polypeptide reads, in one-letter code: MDAPHSKAALDSINELPENILLELFTHVPARQLLLNCRLVCSLWRDLIDLMTLWKRKCLREGFITKDWDQPVADWKIFYFLRSLHRNLLRNPCAEEDMFAWQIDFNGGDRWKVESLPGAHGTDFPDPKVKKYFVTSYEMCLKSQLVDLVAEGYWEELLDTFRPDIVVKDWFAARADCGCTYQLKVQLASADYFVLASFEPPPVTIQQWNNATWTEVSYTFSDYPRGVRYILFQHGGRDTQYWAGWYGPRVTNSSIVVSPKMTRNQASSEAQPGQKHGQEEAAQSPYRAVVQIF.

One can recognise an F-box domain in the interval 10–57 (LDSINELPENILLELFTHVPARQLLLNCRLVCSLWRDLIDLMTLWKRK). The 182-residue stretch at 78-259 (FYFLRSLHRN…VTNSSIVVSP (182 aa)) folds into the FBA domain. Phosphoserine is present on Ser-258. Over residues 261–271 (MTRNQASSEAQ) the composition is skewed to polar residues. The disordered stretch occupies residues 261 to 285 (MTRNQASSEAQPGQKHGQEEAAQSP). Ser-284 is modified (phosphoserine).

In terms of assembly, interacts with VCP. Part of a SCF (SKP1-cullin-F-box) protein ligase complex. Interacts with CHEK1 and CUL1.

It is found in the cytoplasm. It participates in protein modification; protein ubiquitination. In terms of biological role, substrate-recognition component of some SCF (SKP1-CUL1-F-box protein)-type E3 ubiquitin ligase complexes. Involved in endoplasmic reticulum-associated degradation pathway (ERAD) for misfolded lumenal proteins by recognizing and binding sugar chains on unfolded glycoproteins that are retrotranslocated into the cytosol and promoting their ubiquitination and subsequent degradation. Able to recognize and bind denatured glycoproteins, which are modified with not only high-mannose but also complex-type oligosaccharides. Also recognizes sulfated glycans. Also involved in DNA damage response by specifically recognizing activated CHEK1 (phosphorylated on 'Ser-345'), promoting its ubiquitination and degradation. Ubiquitination of CHEK1 is required to ensure that activated CHEK1 does not accumulate as cells progress through S phase, or when replication forks encounter transient impediments during normal DNA replication. The protein is F-box only protein 6 (FBXO6) of Homo sapiens (Human).